The primary structure comprises 306 residues: Curved DNA-binding protein (306 aa).

Residues 5–69 enclose the J domain; that stretch reads DYYAIMGVKP…QRRAEYDQMW (65 aa).

Its subcellular location is the cytoplasm. It is found in the nucleoid. In terms of biological role, DNA-binding protein that preferentially recognizes a curved DNA sequence. It is probably a functional analog of DnaJ; displays overlapping activities with DnaJ, but functions under different conditions, probably acting as a molecular chaperone in an adaptive response to environmental stresses other than heat shock. Lacks autonomous chaperone activity; binds native substrates and targets them for recognition by DnaK. Its activity is inhibited by the binding of CbpM. This is Curved DNA-binding protein from Escherichia fergusonii (strain ATCC 35469 / DSM 13698 / CCUG 18766 / IAM 14443 / JCM 21226 / LMG 7866 / NBRC 102419 / NCTC 12128 / CDC 0568-73).